Consider the following 254-residue polypeptide: Ciliary microtubule associated protein 1A (254 aa).

2 STPGR repeats span residues 180 to 205 and 216 to 241; these read PGPA…MAAR and PGPG…FGIK. The segment at 207–228 is disordered; that stretch reads EPPGDKTLKPGPGAHSPEKVTL.

The protein belongs to the CIMAP family. As to quaternary structure, microtubule inner protein component of sperm flagellar doublet microtubules. As to expression, testis-specific (at protein level). Expression restricted to the germ cell fraction, absent in somatic cell fractions such as Sertoli and Leydig cells. Expression detected in the third week postpartum (23 days) after haploid germ cells developed, expression increased with age. Expressed in the tails of elongated spermatids sticking out toward the tubular lumen, and in cytoplasmic droplets still attached to the spermatid tail membrane. Expressed in the tails of mature sperm, from the connecting piece proximal to the head, along the middle and principal pieces, down to the distal end piece.

Its subcellular location is the cytoplasm. The protein resides in the cytoskeleton. It localises to the flagellum axoneme. Outer dense fibers are filamentous structures located on the outside of the axoneme in the midpiece and principal piece of the mammalian sperm tail. May help to maintain the passive elastic structures and elastic recoil of the sperm tail. This Mus musculus (Mouse) protein is Ciliary microtubule associated protein 1A (Cimap1a).